The following is a 174-amino-acid chain: Ribosome maturation factor RimM (174 aa).

A PRC barrel domain is found at 97–173; that stretch reads GNKFYFHEVI…DLPVGLVEMY (77 aa).

Belongs to the RimM family. As to quaternary structure, binds ribosomal protein uS19.

Its subcellular location is the cytoplasm. An accessory protein needed during the final step in the assembly of 30S ribosomal subunit, possibly for assembly of the head region. Essential for efficient processing of 16S rRNA. May be needed both before and after RbfA during the maturation of 16S rRNA. It has affinity for free ribosomal 30S subunits but not for 70S ribosomes. The protein is Ribosome maturation factor RimM of Flavobacterium johnsoniae (strain ATCC 17061 / DSM 2064 / JCM 8514 / BCRC 14874 / CCUG 350202 / NBRC 14942 / NCIMB 11054 / UW101) (Cytophaga johnsonae).